Here is a 140-residue protein sequence, read N- to C-terminus: Class I hydrophobin C (140 aa).

The first 23 residues, 1–23 (MKFFVPAFLFAATAMALPGSGSA), serve as a signal peptide directing secretion. Disulfide bonds link C41–C114, C49–C108, C50–C85, and C115–C133.

The protein belongs to the fungal hydrophobin family.

It localises to the secreted. Its subcellular location is the cell wall. Functionally, aerial growth, conidiation, and dispersal of filamentous fungi in the environment rely upon a capability of their secreting small amphipathic proteins called hydrophobins (HPBs) with low sequence identity. Class I can self-assemble into an outermost layer of rodlet bundles on aerial cell surfaces, conferring cellular hydrophobicity that supports fungal growth, development and dispersal; whereas Class II form highly ordered films at water-air interfaces through intermolecular interactions but contribute nothing to the rodlet structure. In P.expansum, hydrophobins contribute to germination, tolerance to cold stress and mycotoxins patulin and citrinin production. HfbC is involved in the virulence on apple. The polypeptide is Class I hydrophobin C (Penicillium expansum (Blue mold rot fungus)).